Reading from the N-terminus, the 316-residue chain is 4-hydroxy-3-methylbut-2-enyl diphosphate reductase (316 aa).

Cys-12 serves as a coordination point for [4Fe-4S] cluster. Positions 41 and 74 each coordinate (2E)-4-hydroxy-3-methylbut-2-enyl diphosphate. 2 residues coordinate dimethylallyl diphosphate: His-41 and His-74. Residues His-41 and His-74 each coordinate isopentenyl diphosphate. Cys-96 serves as a coordination point for [4Fe-4S] cluster. His-124 contributes to the (2E)-4-hydroxy-3-methylbut-2-enyl diphosphate binding site. His-124 contributes to the dimethylallyl diphosphate binding site. His-124 contacts isopentenyl diphosphate. Catalysis depends on Glu-126, which acts as the Proton donor. Residue Thr-169 participates in (2E)-4-hydroxy-3-methylbut-2-enyl diphosphate binding. Cys-199 provides a ligand contact to [4Fe-4S] cluster. (2E)-4-hydroxy-3-methylbut-2-enyl diphosphate is bound by residues Ser-227, Ser-228, Asn-229, and Ser-271. Dimethylallyl diphosphate is bound by residues Ser-227, Ser-228, Asn-229, and Ser-271. Isopentenyl diphosphate contacts are provided by Ser-227, Ser-228, Asn-229, and Ser-271.

The protein belongs to the IspH family. It depends on [4Fe-4S] cluster as a cofactor.

It catalyses the reaction isopentenyl diphosphate + 2 oxidized [2Fe-2S]-[ferredoxin] + H2O = (2E)-4-hydroxy-3-methylbut-2-enyl diphosphate + 2 reduced [2Fe-2S]-[ferredoxin] + 2 H(+). The enzyme catalyses dimethylallyl diphosphate + 2 oxidized [2Fe-2S]-[ferredoxin] + H2O = (2E)-4-hydroxy-3-methylbut-2-enyl diphosphate + 2 reduced [2Fe-2S]-[ferredoxin] + 2 H(+). Its pathway is isoprenoid biosynthesis; dimethylallyl diphosphate biosynthesis; dimethylallyl diphosphate from (2E)-4-hydroxy-3-methylbutenyl diphosphate: step 1/1. It participates in isoprenoid biosynthesis; isopentenyl diphosphate biosynthesis via DXP pathway; isopentenyl diphosphate from 1-deoxy-D-xylulose 5-phosphate: step 6/6. Its function is as follows. Catalyzes the conversion of 1-hydroxy-2-methyl-2-(E)-butenyl 4-diphosphate (HMBPP) into a mixture of isopentenyl diphosphate (IPP) and dimethylallyl diphosphate (DMAPP). Acts in the terminal step of the DOXP/MEP pathway for isoprenoid precursor biosynthesis. The polypeptide is 4-hydroxy-3-methylbut-2-enyl diphosphate reductase (Vibrio cholerae serotype O1 (strain ATCC 39315 / El Tor Inaba N16961)).